A 97-amino-acid polypeptide reads, in one-letter code: Translation initiation factor 1A (97 aa).

The S1-like domain maps to 8 to 82; the sequence is IRVRLPDRKK…DRADIVWRYT (75 aa).

It belongs to the eIF-1A family.

Its function is as follows. Seems to be required for maximal rate of protein biosynthesis. Enhances ribosome dissociation into subunits and stabilizes the binding of the initiator Met-tRNA(I) to 40 S ribosomal subunits. The sequence is that of Translation initiation factor 1A (eIF1A) from Archaeoglobus fulgidus (strain ATCC 49558 / DSM 4304 / JCM 9628 / NBRC 100126 / VC-16).